The following is a 372-amino-acid chain: PqqA peptide cyclase (372 aa).

Residues 4 to 220 (APPPLSVLLE…ETARRQLGDR (217 aa)) form the Radical SAM core domain. Residues C18, C22, and C25 each contribute to the [4Fe-4S] cluster site. The interval 342 to 372 (ATAEQESASPAPAFIYRRPERPAAATADPLE) is disordered.

The protein belongs to the radical SAM superfamily. PqqE family. Interacts with PqqD. The interaction is necessary for activity of PqqE. The cofactor is [4Fe-4S] cluster.

The enzyme catalyses [PQQ precursor protein] + S-adenosyl-L-methionine = E-Y cross-linked-[PQQ precursor protein] + 5'-deoxyadenosine + L-methionine + H(+). It functions in the pathway cofactor biosynthesis; pyrroloquinoline quinone biosynthesis. Its function is as follows. Catalyzes the cross-linking of a glutamate residue and a tyrosine residue in the PqqA protein as part of the biosynthesis of pyrroloquinoline quinone (PQQ). This is PqqA peptide cyclase from Xanthomonas euvesicatoria pv. vesicatoria (strain 85-10) (Xanthomonas campestris pv. vesicatoria).